A 404-amino-acid chain; its full sequence is V-set and immunoglobulin domain-containing protein 1 (404 aa).

Residues 1–22 form the signal peptide; it reads MMVFAFWKVFLILNCLAGQVNM. Residues 23–133 enclose the Ig-like V-type domain; the sequence is VQVTIPDTFV…DFFGKNQGIL (111 aa). Residues 23-233 are Extracellular-facing; sequence VQVTIPDTFV…EIDLTSSDPE (211 aa). Residue asparagine 39 is glycosylated (N-linked (GlcNAc...) asparagine). 2 disulfides stabilise this stretch: cysteine 44-cysteine 117 and cysteine 162-cysteine 212. Residues 141–228 form the Ig-like C2-type domain; sequence PSKPFCSIQG…GNSSCEIDLT (88 aa). Residues asparagine 201 and asparagine 220 are each glycosylated (N-linked (GlcNAc...) asparagine). A helical transmembrane segment spans residues 234–254; the sequence is VGIIIGALVGALTGAAIIICV. Residues 255–404 are Cytoplasmic-facing; the sequence is VYFARNKVKS…REEEKETVKA (150 aa). 2 disordered regions span residues 266–285 and 298–404; these read QKNLNSSTELEPMTKVHHSR and EGTL…TVKA. Residues serine 271 and serine 272 each carry the phosphoserine modification. Positions 301–314 are enriched in polar residues; it reads LPSSIHASHNTEPT. The segment covering 357-383 has biased composition (acidic residues); sequence MELEPETEPEPEPEPEPQPELESELEP. Positions 393–404 are enriched in basic and acidic residues; that stretch reads PMREEEKETVKA.

It is found in the membrane. The protein is V-set and immunoglobulin domain-containing protein 1 (Vsig1) of Rattus norvegicus (Rat).